A 131-amino-acid chain; its full sequence is Profilin-2 (131 aa).

Belongs to the profilin family. As to quaternary structure, occurs in many kinds of cells as a complex with monomeric actin in a 1:1 ratio.

The protein resides in the cytoplasm. Its subcellular location is the cytoskeleton. In terms of biological role, binds to actin and affects the structure of the cytoskeleton. At high concentrations, profilin prevents the polymerization of actin, whereas it enhances it at low concentrations. By binding to PIP2, it inhibits the formation of IP3 and DG. This is Profilin-2 from Lilium longiflorum (Trumpet lily).